We begin with the raw amino-acid sequence, 421 residues long: MSNNEFHQRRLSATPRGVGVMCNFFAQSAENATLKDVEGNEYIDFAAGIAVLNTGHRHPDLVAAVEQQLQQFTHTAYQIVPYESYVTLAEKINALAPVSGQAKTAFFTTGAEAVENAVKIARAHTGRPGVIAFSGGFHGRTYMTMALTGKVAPYKIGFGPFPGSVYHVPYPSDLHGISTQDSLDAIERLFKSDIEAKQVAAIIFEPVQGEGGFNVAPKELVAAIRRLCDEHGIVMIADEVQSGFARTGKLFAMDHYADKPDLMTMAKSLAGGMPLSGVVGNANIMDAPAPGGLGGTYAGNPLAVAAAHAVLNIIDKESLCERANQLGQRLKNTLIDAKESVPAIAAVRGLGSMIAVEFNDPQTGEPSAAIAQKIQQRALAQGLLLLTCGAYGNVIRFLYPLTIPDAQFDAAMKILQDALSD.

Pyridoxal 5'-phosphate contacts are provided by residues Gly110–Ala111 and Asp238–Gln241. Lys267 is subject to N6-(pyridoxal phosphate)lysine. Thr296 is a pyridoxal 5'-phosphate binding site.

This sequence belongs to the class-III pyridoxal-phosphate-dependent aminotransferase family. Pyridoxal 5'-phosphate serves as cofactor.

The enzyme catalyses 4-aminobutanoate + 2-oxoglutarate = succinate semialdehyde + L-glutamate. It participates in amine and polyamine degradation; putrescine degradation; succinate semialdehyde from 4-aminobutanoate. Its activity is regulated as follows. Completely inhibited by succinate and low-aeration conditions. Functionally, catalyzes the transfer of the amino group from gamma-aminobutyrate (GABA) to alpha-ketoglutarate (KG) to yield succinic semialdehyde (SSA). PuuE is important for utilization of putrescine as the sole nitrogen or carbon source. In Escherichia coli (strain K12), this protein is 4-aminobutyrate aminotransferase PuuE (puuE).